Here is a 37-residue protein sequence, read N- to C-terminus: Large ribosomal subunit protein bL36 (37 aa).

This sequence belongs to the bacterial ribosomal protein bL36 family.

The chain is Large ribosomal subunit protein bL36 from Francisella tularensis subsp. mediasiatica (strain FSC147).